A 569-amino-acid polypeptide reads, in one-letter code: Methionine--tRNA ligase (569 aa).

Positions 11–21 (PYINGIKHLGN) match the 'HIGH' region motif. Residues cysteine 143, cysteine 146, cysteine 156, and cysteine 159 each contribute to the Zn(2+) site. The 'KMSKS' region signature appears at 342 to 346 (KFSTS). Threonine 345 provides a ligand contact to ATP.

The protein belongs to the class-I aminoacyl-tRNA synthetase family. MetG type 1 subfamily. As to quaternary structure, monomer. Requires Zn(2+) as cofactor.

It is found in the cytoplasm. It catalyses the reaction tRNA(Met) + L-methionine + ATP = L-methionyl-tRNA(Met) + AMP + diphosphate. In terms of biological role, is required not only for elongation of protein synthesis but also for the initiation of all mRNA translation through initiator tRNA(fMet) aminoacylation. The sequence is that of Methionine--tRNA ligase from Caulobacter vibrioides (strain ATCC 19089 / CIP 103742 / CB 15) (Caulobacter crescentus).